A 368-amino-acid chain; its full sequence is Homoserine O-acetyltransferase (368 aa).

The region spanning 43–346 (ILLEHALTGT…EYGHDAFLVE (304 aa)) is the AB hydrolase-1 domain. The active-site Nucleophile is serine 145. Arginine 212 contacts substrate. Catalysis depends on residues aspartate 307 and histidine 340. Aspartate 341 is a binding site for substrate.

Belongs to the AB hydrolase superfamily. MetX family. As to quaternary structure, homodimer.

The protein resides in the cytoplasm. The catalysed reaction is L-homoserine + acetyl-CoA = O-acetyl-L-homoserine + CoA. It functions in the pathway amino-acid biosynthesis; L-methionine biosynthesis via de novo pathway; O-acetyl-L-homoserine from L-homoserine: step 1/1. Functionally, transfers an acetyl group from acetyl-CoA to L-homoserine, forming acetyl-L-homoserine. The polypeptide is Homoserine O-acetyltransferase (Listeria innocua serovar 6a (strain ATCC BAA-680 / CLIP 11262)).